Reading from the N-terminus, the 1044-residue chain is Diacylglycerol lipase-alpha (1044 aa).

Over 1-22 (MPGIVVFRRRWSVGSDDLVLPA) the chain is Cytoplasmic. A helical transmembrane segment spans residues 23–43 (IFLFLLHTTWFVILSVVLFGL). Residues 44–60 (VYNPHEACSLNLVDHGR) are Extracellular-facing. The helical transmembrane segment at 61–81 (GYLGILLSCMIAEMAIIWLSM) threads the bilayer. The Cytoplasmic portion of the chain corresponds to 82-101 (RGGILYTEPRDSMQYVLYVR). Residues 102–122 (LAILVIEFIYAIVGIVWLTQY) form a helical membrane-spanning segment. Residues 123 to 136 (YTSCNDLTAKNVTL) are Extracellular-facing. Asn-133 carries N-linked (GlcNAc...) asparagine glycosylation. Residues 137-157 (GMVVCNWVVILSVCITVLCVF) form a helical membrane-spanning segment. Residues 158–1044 (DPTGRTFVKL…KQDDLVISAR (887 aa)) are Cytoplasmic-facing. Active-site charge relay system residues include Ser-472 and Asp-524. A phosphoserine mark is found at Ser-728, Ser-730, Ser-733, Ser-744, Ser-784, Ser-786, Ser-808, Ser-810, Ser-835, Ser-849, and Ser-954. The segment at 848-905 (LSKHSQDTQPLEAALGSGGVTPERPPSAANDEEEAAGGSEGGGVAPRGELALHNGRLG) is disordered. A disordered region spans residues 1013 to 1044 (QECLATDKIRTSTPTGHGASPTKQDDLVISAR). Thr-1025 carries the phosphothreonine modification.

This sequence belongs to the AB hydrolase superfamily. Lipase family. As to quaternary structure, interacts (via C-terminal) with CAMK2A; leading to the phosphorylation and inhibition of DAGLA enzymatic activity. Interacts (via PPXXF motif) with HOMER1 and HOMER2; this interaction is required for DAGLA membrane localization. Ca(2+) serves as cofactor. Post-translationally, phosphorylated at Ser-784 and Ser-810 by CAMK2A; phosphorylation by CAMK2A inhibits diacylglycerol lipase activity.

Its subcellular location is the cell membrane. It localises to the cell projection. The protein localises to the dendritic spine membrane. The protein resides in the postsynaptic density membrane. It is found in the early endosome membrane. The enzyme catalyses a 1,2-diacyl-sn-glycerol + H2O = a 2-acylglycerol + a fatty acid + H(+). It carries out the reaction 1-octadecanoyl-2-(5Z,8Z,11Z,14Z-eicosatetraenoyl)-sn-glycerol + H2O = 2-(5Z,8Z,11Z,14Z-eicosatetraenoyl)-glycerol + octadecanoate + H(+). The catalysed reaction is 1,2-di-(9Z-octadecenoyl)-sn-glycerol + H2O = 2-(9Z-octadecenoyl)-glycerol + (9Z)-octadecenoate + H(+). It catalyses the reaction 1-(9Z-octadecenoyl)-2-(5Z,8Z,11Z,14Z-eicosatetraenoyl)-sn-glycerol + H2O = 2-(5Z,8Z,11Z,14Z-eicosatetraenoyl)-glycerol + (9Z)-octadecenoate + H(+). The enzyme catalyses 1-(9Z-octadecenoyl)-2-octadecanoyl-sn-glycerol + H2O = 2-octadecanoylglycerol + (9Z)-octadecenoate + H(+). It carries out the reaction 1-(9Z-octadecenoyl)-2-(9Z,12Z-octadecadienoyl)-sn-glycerol + H2O = 2-(9Z,12Z-octadecadienoyl)-glycerol + (9Z)-octadecenoate + H(+). The catalysed reaction is 1-(9Z-octadecenoyl)-2-O-(5Z,8Z,11Z,14Z-eicosatetraenyl)-sn-glycerol + H2O = 2-O-(5Z,8Z,11Z,14Z)-eicosatetraenylglycerol + (9Z)-octadecenoate + H(+). Inhibited by 1,2,3-triazole urea covalent inhibitors KT172, DH376 and DO34. Inhibited by p-hydroxy-mercuri-benzoate and HgCl(2), but not to PMSF. Also inhibited by RHC80267. Diacylglycerol lipase activity is inhibited by the phosphorylation of Ser-784 and Ser-810 by CAMK2A. Serine hydrolase that hydrolyzes arachidonic acid-esterified diacylglycerols (DAGs) to produce the principal endocannabinoid, 2-arachidonoylglycerol (2-AG). Preferentially hydrolyzes sn-1 fatty acids from diacylglycerols (DAG) that contain arachidonic acid (AA) esterified at the sn-2 position to biosynthesize 2-AG. Has negligible activity against other lipids including monoacylglycerols and phospholipids. Plays a key role in regulating 2-AG signaling in the CNS. Controls the activity of 2-AG as a retrograde messenger at neuronal synapses. Supports axonal growth during development and adult neurogenesis. Plays a role for eCB signaling in the physiological regulation of anxiety and depressive behaviors. Also regulates neuroinflammatory responses in the brain, in particular, LPS-induced microglial activation. In Rattus norvegicus (Rat), this protein is Diacylglycerol lipase-alpha (Dagla).